A 184-amino-acid polypeptide reads, in one-letter code: ADP-ribosylation factor-like protein 8b (184 aa).

The note=Mediates targeting to membranes intramembrane region spans 1 to 18; it reads MGLWDALLNWLRSLFFKQ. GTP-binding positions include 29 to 34, 48 to 51, 70 to 74, and 129 to 132; these read NAGKTS, MIPT, DLGGQ, and NKID.

Belongs to the small GTPase superfamily. Arf family. In terms of assembly, interacts with tubulin.

The protein resides in the late endosome membrane. It is found in the lysosome membrane. Its subcellular location is the cytoplasm. It localises to the cytoskeleton. The protein localises to the spindle. Functionally, may play a role in lysosome motility. May play a role in chromosome segregation. Its function is as follows. (Microbial infection) Component of tomato mosaic virus (ToMV) RNA replication complexes. Required for tobamovirus multiplication, especially for efficient negative-strand RNA synthesis and viral RNA capping. The sequence is that of ADP-ribosylation factor-like protein 8b from Arabidopsis thaliana (Mouse-ear cress).